The following is a 312-amino-acid chain: 2-phospho-L-lactate transferase (312 aa).

7,8-didemethyl-8-hydroxy-5-deazariboflavin-binding residues include D50 and K89.

This sequence belongs to the CofD family. In terms of assembly, homodimer. Mg(2+) is required as a cofactor.

It catalyses the reaction (2S)-lactyl-2-diphospho-5'-guanosine + 7,8-didemethyl-8-hydroxy-5-deazariboflavin = oxidized coenzyme F420-0 + GMP + H(+). The protein operates within cofactor biosynthesis; coenzyme F420 biosynthesis. Catalyzes the transfer of the 2-phospholactate moiety from (2S)-lactyl-2-diphospho-5'-guanosine to 7,8-didemethyl-8-hydroxy-5-deazariboflavin (FO) with the formation of oxidized coenzyme F420-0 and GMP. This chain is 2-phospho-L-lactate transferase, found in Methanococcus vannielii (strain ATCC 35089 / DSM 1224 / JCM 13029 / OCM 148 / SB).